The chain runs to 219 residues: Ras-related protein Rab-3D (219 aa).

N-acetylalanine is present on Ala2. 29–37 (GNSSVGKTS) contacts GDP. Residues Ser31, Ser32, Val33, Gly34, Lys35, Thr36, Ser37, Pro49, and Ser53 each coordinate GTP. Thr36 contributes to the Mg(2+) binding site. A Switch 1 motif is present at residues 49–58 (PAFVSTVGID). The Mg(2+) site is built by Thr54 and Asp77. A GTP-binding site is contributed by Gly80. A Switch 2 motif is present at residues 80–96 (GQERYRTITTAYYRGAM). The residue at position 86 (Thr86) is a Phosphothreonine; by LRRK2. Asn135, Lys136, Asp138, Ala166, and Lys167 together coordinate GTP. GDP-binding positions include 135 to 138 (NKCD) and 165 to 167 (SAK). A Phosphoserine modification is found at Ser190. Residues 190 to 199 (SLEPSSSSGS) show a composition bias toward low complexity. The tract at residues 190 to 219 (SLEPSSSSGSNGKGPAVGDAPAPQPSSCSC) is disordered. S-geranylgeranyl cysteine attachment occurs at residues Cys217 and Cys219. Cys219 bears the Cysteine methyl ester mark.

Belongs to the small GTPase superfamily. Rab family. Interacts with RIMS1, RIMS2, RPH3A, RPH3AL and RAB3IP. The GTP-bound form interacts with REP15. Interacts with CHM and CHML; phosphorylation at Thr-86 disrupts these interactions. Interacts with MADD (via uDENN domain); the GTP-bound form is preferred for interaction. It depends on Mg(2+) as a cofactor. Post-translationally, phosphorylation of Thr-86 in the switch II region by LRRK2 prevents the association of RAB regulatory proteins, including CHM and CHML. As to expression, highly expressed in granulocytes of peripheral blood. Constitutively expressed at low levels in all hematopoietic cell lines investigated.

Its subcellular location is the cell membrane. The enzyme catalyses GTP + H2O = GDP + phosphate + H(+). Its activity is regulated as follows. Regulated by guanine nucleotide exchange factors (GEFs) which promote the exchange of bound GDP for free GTP. Regulated by GTPase activating proteins (GAPs) which increase the GTP hydrolysis activity. Inhibited by GDP dissociation inhibitors (GDIs) which prevent Rab-GDP dissociation. Functionally, the small GTPases Rab are key regulators of intracellular membrane trafficking, from the formation of transport vesicles to their fusion with membranes. Rabs cycle between an inactive GDP-bound form and an active GTP-bound form that is able to recruit to membranes different sets of downstream effectors directly responsible for vesicle formation, movement, tethering and fusion. RAB3D may be involved in the insulin-induced exocytosis of GLUT4-containing vesicles in adipocytes. The protein is Ras-related protein Rab-3D of Homo sapiens (Human).